We begin with the raw amino-acid sequence, 76 residues long: Waprin-Rha1 (76 aa).

A signal peptide spans 1–24 (MQARVFLLLLGVILLGMMGPMVSA). Positions 25-75 (QDGKAGSCPDVNQPIPPLGVCKTTCATDSNCPDIQKCCKNGCGHMSCTRPS) constitute a WAP domain. Cystine bridges form between C32/C62, C45/C66, C49/C61, and C55/C71.

The protein belongs to the venom waprin family. Expressed by the venom gland.

The protein localises to the secreted. Functionally, damages membranes of susceptible bacteria. Has no hemolytic activity. Not toxic to mice. Does not inhibit the proteinases elastase and cathepsin G. This is Waprin-Rha1 from Rhabdophis tigrinus tigrinus (Tiger keelback snake).